The following is a 166-amino-acid chain: Large ribosomal subunit protein uL10 (166 aa).

It belongs to the universal ribosomal protein uL10 family. In terms of assembly, part of the ribosomal stalk of the 50S ribosomal subunit. The N-terminus interacts with L11 and the large rRNA to form the base of the stalk. The C-terminus forms an elongated spine to which L12 dimers bind in a sequential fashion forming a multimeric L10(L12)X complex.

Forms part of the ribosomal stalk, playing a central role in the interaction of the ribosome with GTP-bound translation factors. The protein is Large ribosomal subunit protein uL10 of Phytoplasma australiense.